Here is a 127-residue protein sequence, read N- to C-terminus: Fluoride-specific ion channel FluC 1 (127 aa).

The next 4 membrane-spanning stretches (helical) occupy residues 4-24, 35-55, 71-91, and 101-121; these read TLLA…LVSL, VGTL…LAFF, TGFC…VYLI, and GTIL…FILV. Na(+) is bound by residues glycine 75 and threonine 78.

It belongs to the fluoride channel Fluc/FEX (TC 1.A.43) family.

The protein resides in the cell inner membrane. It carries out the reaction fluoride(in) = fluoride(out). With respect to regulation, na(+) is not transported, but it plays an essential structural role and its presence is essential for fluoride channel function. In terms of biological role, fluoride-specific ion channel. Important for reducing fluoride concentration in the cell, thus reducing its toxicity. This Yersinia pestis protein is Fluoride-specific ion channel FluC 1.